The following is a 455-amino-acid chain: Bifunctional protein GlmU (455 aa).

A pyrophosphorylase region spans residues 1 to 226 (MALNVVILAA…AIEVEGANNR (226 aa)). UDP-N-acetyl-alpha-D-glucosamine-binding positions include 8–11 (LAAG), Lys-22, Gln-73, 78–79 (GT), 100–102 (YGD), Gly-137, Glu-151, Asn-166, and Asn-224. Asp-102 lines the Mg(2+) pocket. Asn-224 provides a ligand contact to Mg(2+). The linker stretch occupies residues 227 to 247 (VQLAQLERAYQARAAEKLMLE). The tract at residues 248–455 (GANLRDPARL…WARPVKKPKS (208 aa)) is N-acetyltransferase. Arg-330 and Lys-348 together coordinate UDP-N-acetyl-alpha-D-glucosamine. The Proton acceptor role is filled by His-360. UDP-N-acetyl-alpha-D-glucosamine is bound by residues Tyr-363 and Asn-374. Acetyl-CoA contacts are provided by residues Ala-377, 383 to 384 (NY), Ser-402, Ala-420, and Arg-437.

In the N-terminal section; belongs to the N-acetylglucosamine-1-phosphate uridyltransferase family. It in the C-terminal section; belongs to the transferase hexapeptide repeat family. Homotrimer. Mg(2+) serves as cofactor.

It is found in the cytoplasm. It catalyses the reaction alpha-D-glucosamine 1-phosphate + acetyl-CoA = N-acetyl-alpha-D-glucosamine 1-phosphate + CoA + H(+). The catalysed reaction is N-acetyl-alpha-D-glucosamine 1-phosphate + UTP + H(+) = UDP-N-acetyl-alpha-D-glucosamine + diphosphate. It functions in the pathway nucleotide-sugar biosynthesis; UDP-N-acetyl-alpha-D-glucosamine biosynthesis; N-acetyl-alpha-D-glucosamine 1-phosphate from alpha-D-glucosamine 6-phosphate (route II): step 2/2. It participates in nucleotide-sugar biosynthesis; UDP-N-acetyl-alpha-D-glucosamine biosynthesis; UDP-N-acetyl-alpha-D-glucosamine from N-acetyl-alpha-D-glucosamine 1-phosphate: step 1/1. The protein operates within bacterial outer membrane biogenesis; LPS lipid A biosynthesis. Catalyzes the last two sequential reactions in the de novo biosynthetic pathway for UDP-N-acetylglucosamine (UDP-GlcNAc). The C-terminal domain catalyzes the transfer of acetyl group from acetyl coenzyme A to glucosamine-1-phosphate (GlcN-1-P) to produce N-acetylglucosamine-1-phosphate (GlcNAc-1-P), which is converted into UDP-GlcNAc by the transfer of uridine 5-monophosphate (from uridine 5-triphosphate), a reaction catalyzed by the N-terminal domain. This chain is Bifunctional protein GlmU, found in Shewanella sediminis (strain HAW-EB3).